A 168-amino-acid polypeptide reads, in one-letter code: Photosystem I assembly protein Ycf3 (168 aa).

TPR repeat units follow at residues 35-68 (AFTYYRDGMSAQSEGNYAEALQNYYEAMRLEIDP), 72-105 (SYILYNIGLIHTSNGEHMKALEYYFRALERNPFL), and 120-153 (GEKAIQQGDSEIAEAWFDQAAEYWKQALALTPGN).

The protein belongs to the Ycf3 family.

The protein resides in the plastid membrane. In terms of biological role, essential for the assembly of the photosystem I (PSI) complex. May act as a chaperone-like factor to guide the assembly of the PSI subunits. The chain is Photosystem I assembly protein Ycf3 from Cuscuta exaltata (Tall dodder).